Here is a 330-residue protein sequence, read N- to C-terminus: Putative quinone oxidoreductase YhfP (330 aa).

NADP(+)-binding positions include Tyr-45, 160–163 (TGGV), 182–184 (TGN), Arg-202, Leu-248, Ile-262, Ser-273, and Asn-320.

It belongs to the zinc-containing alcohol dehydrogenase family. Quinone oxidoreductase subfamily. Homodimer, or homotetramer.

The protein localises to the cytoplasm. The sequence is that of Putative quinone oxidoreductase YhfP (yhfP) from Bacillus subtilis (strain 168).